Consider the following 474-residue polypeptide: MNTAPFKLEADFASALPTMAAPWQGEESPNPELVILNDDLAYSLGLDPTWLRTPEGVQFLLGRNPEPLTKAVAQAYSGHQFGQFVASLGDGRALLLGEARSADGVLHDIHLKGSGRTQFSRGADGRAVLGPVLREYIISEAMHALGVPTTRSLAVISTGRKIQRGSVAPGAVLVRVATSLIRVGSFQYSNISGGIELSQHLANYTITRHFPSLVAELSAPTPATYVSLFKAILQRQADTVGKWTRLGFVHGALNTDNTLISGETVDYGPCAFMERYRGDAKFSSIDTYGRYKFENQPMILGWNMARLVETLLPLLGATPDEGMTAAQEALGEFDDLCEQAIRKEFATALGLDESDTGTVEQFRELLYLHNPDITTLLRSLTDNTAPPSGFEAFVHDWKTQDPDFEAMQAVNPLFIPRNHLVEAALADAIVGNLEKFHELLAAVTNPFDPTAGPDELRLPSEEGFEEDYMTFCGT.

The ATP site is built by Gly-89, Gly-91, Arg-92, Lys-112, Asp-124, Gly-125, Arg-175, and Arg-182. The active-site Proton acceptor is Asp-256. The Mg(2+) site is built by Asn-257 and Asp-266. Asp-266 is an ATP binding site.

Belongs to the SELO family. Mg(2+) serves as cofactor. The cofactor is Mn(2+).

The catalysed reaction is L-seryl-[protein] + ATP = 3-O-(5'-adenylyl)-L-seryl-[protein] + diphosphate. The enzyme catalyses L-threonyl-[protein] + ATP = 3-O-(5'-adenylyl)-L-threonyl-[protein] + diphosphate. It carries out the reaction L-tyrosyl-[protein] + ATP = O-(5'-adenylyl)-L-tyrosyl-[protein] + diphosphate. It catalyses the reaction L-histidyl-[protein] + UTP = N(tele)-(5'-uridylyl)-L-histidyl-[protein] + diphosphate. The catalysed reaction is L-seryl-[protein] + UTP = O-(5'-uridylyl)-L-seryl-[protein] + diphosphate. The enzyme catalyses L-tyrosyl-[protein] + UTP = O-(5'-uridylyl)-L-tyrosyl-[protein] + diphosphate. Nucleotidyltransferase involved in the post-translational modification of proteins. It can catalyze the addition of adenosine monophosphate (AMP) or uridine monophosphate (UMP) to a protein, resulting in modifications known as AMPylation and UMPylation. The sequence is that of Protein nucleotidyltransferase YdiU from Corynebacterium glutamicum (strain R).